Consider the following 80-residue polypeptide: Trefoil factor 3 (80 aa).

A signal peptide spans 1–23 (MEARVLWLLVVVLVLGSSSLAVA). One can recognise a P-type domain in the interval 30–73 (NLCEVPPKDRVDCGYPEITSEQCVNRGCCFDSSIHGVPWCFKPL). Disulfide bonds link Cys-32/Cys-58, Cys-42/Cys-57, and Cys-52/Cys-69.

In terms of assembly, monomer. Homodimer; disulfide-linked.

Its subcellular location is the secreted. The protein localises to the extracellular space. The protein resides in the extracellular matrix. It localises to the cytoplasm. Its function is as follows. Involved in the maintenance and repair of the intestinal mucosa. Promotes the mobility of epithelial cells in healing processes (motogen). This chain is Trefoil factor 3 (TFF3), found in Canis lupus familiaris (Dog).